A 290-amino-acid polypeptide reads, in one-letter code: ATP synthase gamma chain (290 aa).

It belongs to the ATPase gamma chain family. In terms of assembly, F-type ATPases have 2 components, CF(1) - the catalytic core - and CF(0) - the membrane proton channel. CF(1) has five subunits: alpha(3), beta(3), gamma(1), delta(1), epsilon(1). CF(0) has three main subunits: a, b and c.

The protein resides in the cell inner membrane. Functionally, produces ATP from ADP in the presence of a proton gradient across the membrane. The gamma chain is believed to be important in regulating ATPase activity and the flow of protons through the CF(0) complex. The polypeptide is ATP synthase gamma chain (Bacteroides fragilis (strain ATCC 25285 / DSM 2151 / CCUG 4856 / JCM 11019 / LMG 10263 / NCTC 9343 / Onslow / VPI 2553 / EN-2)).